The chain runs to 157 residues: SsrA-binding protein (157 aa).

The interval 133–157 (LHDKRESEKKRDWGREKGRLLRARG) is disordered. Basic and acidic residues predominate over residues 135–151 (DKRESEKKRDWGREKGR).

This sequence belongs to the SmpB family.

It is found in the cytoplasm. Functionally, required for rescue of stalled ribosomes mediated by trans-translation. Binds to transfer-messenger RNA (tmRNA), required for stable association of tmRNA with ribosomes. tmRNA and SmpB together mimic tRNA shape, replacing the anticodon stem-loop with SmpB. tmRNA is encoded by the ssrA gene; the 2 termini fold to resemble tRNA(Ala) and it encodes a 'tag peptide', a short internal open reading frame. During trans-translation Ala-aminoacylated tmRNA acts like a tRNA, entering the A-site of stalled ribosomes, displacing the stalled mRNA. The ribosome then switches to translate the ORF on the tmRNA; the nascent peptide is terminated with the 'tag peptide' encoded by the tmRNA and targeted for degradation. The ribosome is freed to recommence translation, which seems to be the essential function of trans-translation. This chain is SsrA-binding protein, found in Bradyrhizobium sp. (strain BTAi1 / ATCC BAA-1182).